We begin with the raw amino-acid sequence, 83 residues long: Putative defensin-like protein 110 (83 aa).

The first 24 residues, 1–24 (MAITKKNLIAFVFTILFVISYVHC), serve as a signal peptide directing secretion. 4 disulfide bridges follow: cysteine 43–cysteine 81, cysteine 49–cysteine 73, cysteine 59–cysteine 79, and cysteine 63–cysteine 80.

This sequence belongs to the DEFL family.

The protein localises to the secreted. The protein is Putative defensin-like protein 110 of Arabidopsis thaliana (Mouse-ear cress).